Consider the following 428-residue polypeptide: ETS domain-containing protein Elk-1 (428 aa).

A DNA-binding region (ETS) is located at residues 5–86; sequence VTLWQFLLQL…SGQKFVYKFV (82 aa). Disordered regions lie at residues 121–149, 165–205, and 228–358; these read AAPGDTVSGKPGTPKGAGMAGPGGLARSS, QSLQ…SPLE, and NLKS…SLLP. The segment covering 177–205 has biased composition (low complexity); that stretch reads PAVVLPSAAPAGAAAPPSGSRSTSPSPLE. Glycyl lysine isopeptide (Lys-Gly) (interchain with G-Cter in SUMO) cross-links involve residues Lys-230, Lys-249, and Lys-254. Positions 248 to 261 are enriched in basic and acidic residues; the sequence is VKVEGPKEELEVAG. Position 324 is a phosphoserine; by MAPK1 (Ser-324). 4 positions are modified to phosphothreonine; by MAPK1: Thr-336, Thr-353, Thr-363, and Thr-368. Positions 349–399 are sufficient for interaction with MAD2L2; sequence GPALTPSLLPTHTLTPVLLTPSSLPPSIHFWSTLSPIAPRSPAKLSFQFPS. An O-linked (GlcNAc) threonine glycan is attached at Thr-381. Phosphoserine; by MAPK1 and MAPK8 is present on Ser-383. Ser-389 carries the post-translational modification Phosphoserine; by MAPK1. Thr-417 carries the post-translational modification Phosphothreonine; by MAPK1. Phosphoserine; by MAPK1 is present on Ser-422.

This sequence belongs to the ETS family. Interacts in its sumoylated form with PIAS2/PIASX which enhances its transcriptional activator activity. Interacts with MAD2L2; the interaction is direct and promotes phosphorylation by the kinases MAPK8 and/or MAPK9. Interacts with POU1F1. Post-translationally, sumoylation represses transcriptional activator activity as it results in recruitment of HDAC2 to target gene promoters which leads to decreased histone acetylation and reduced transactivator activity. It also regulates nuclear retention. In terms of processing, on mitogenic stimulation, phosphorylated on C-terminal serine and threonine residues by MAPK1. Ser-383 and Ser-389 are the preferred sites for MAPK1. In vitro, phosphorylation by MAPK1 potentiates ternary complex formation with the serum responses factors, SRE and SRF. Also phosphorylated on Ser-383 by MAPK8 and/or MAKP9. Phosphorylation leads to loss of sumoylation and restores transcriptional activator activity. Phosphorylated and activated by CAMK4, MAPK11, MAPK12 and MAPK14. Upon bFGF stimulus, phosphorylated by PAK1. Phosphorylated by PRP4K at Thr-417; phosphorylation activation ELK1 transcriptional activity. As to expression, lung and testis.

The protein resides in the nucleus. Its function is as follows. Transcription factor that binds to purine-rich DNA sequences. Forms a ternary complex with SRF and the ETS and SRF motifs of the serum response element (SRE) on the promoter region of immediate early genes such as FOS and IER2. Induces target gene transcription upon JNK and MAPK-signaling pathways stimulation. In Homo sapiens (Human), this protein is ETS domain-containing protein Elk-1.